We begin with the raw amino-acid sequence, 325 residues long: Solute-binding protein RD1_1052 (325 aa).

Positions 1–26 (MRLFTKIKGLAAVTCVAALASSAAFA) are cleaved as a signal peptide. Residues Glu75, 93–95 (GES), 148–151 (RGPR), Arg171, and Asn211 contribute to the D-mannonate site. Residues Glu75, 93 to 95 (GES), 148 to 151 (RGPR), Arg171, and Asn211 contribute to the L-galactonate site.

The protein belongs to the bacterial solute-binding protein 7 family. In terms of assembly, the complex is comprised of an extracytoplasmic solute-binding protein and a heteromeric permease formed by two transmembrane proteins.

It localises to the periplasm. In terms of biological role, solute-binding protein that binds L-galactonate and D-mannonate (in vitro). Probably part of a tripartite ATP-independent periplasmic (TRAP) transport system that mediates solute transport into the cytoplasm. The polypeptide is Solute-binding protein RD1_1052 (Roseobacter denitrificans (strain ATCC 33942 / OCh 114) (Erythrobacter sp. (strain OCh 114))).